The primary structure comprises 1035 residues: DNA polymerase I B, mitochondrial (1035 aa).

A mitochondrion-targeting transit peptide spans 1-42 (MAVAPPLPPAPARLLRRWQGSSPWLSSSFGRTRYFSRPAFAA). The disordered stretch occupies residues 100–124 (TNGTTPLRVGNLRHDPSEDIRSSNY). The span at 111-120 (LRHDPSEDIR) shows a compositional bias: basic and acidic residues. Residues 317-478 (FGNGKTCIWV…LYESLKNKLE (162 aa)) form the 3'-5' exonuclease domain. A polymerase region spans residues 699 to 1032 (HAIAALCEVF…VDAKYAKSWY (334 aa)).

The protein belongs to the DNA polymerase type-A family.

The protein localises to the mitochondrion. It carries out the reaction DNA(n) + a 2'-deoxyribonucleoside 5'-triphosphate = DNA(n+1) + diphosphate. With respect to regulation, not inhibited by aphidicolin. Its function is as follows. In addition to polymerase activity, this DNA polymerase exhibits 5'-3' exonuclease activity. May be required for DNA replication and accumulation in mitochondria. This chain is DNA polymerase I B, mitochondrial, found in Oryza sativa subsp. japonica (Rice).